Here is a 378-residue protein sequence, read N- to C-terminus: Chaperone protein DnaJ 2 (378 aa).

The 65-residue stretch at 4-68 (DYYAVLGVRR…QKKQVYDLGG (65 aa)) folds into the J domain. Residues 130 to 212 (GTTKDIQVET…CAGDGRVRSR (83 aa)) form a CR-type zinc finger. Residues C143, C146, C160, C163, C186, C189, C200, and C203 each coordinate Zn(2+). CXXCXGXG motif repeat units lie at residues 143–150 (CTTCSGEG), 160–167 (CDMCRGRG), 186–193 (CPQCQGFG), and 200–207 (CPECAGDG). The disordered stretch occupies residues 351–378 (RGEERPTGQFQPGQQGLFSRLKDAFNGR). The segment covering 358–367 (GQFQPGQQGL) has biased composition (polar residues).

Belongs to the DnaJ family. In terms of assembly, homodimer. Zn(2+) is required as a cofactor.

It is found in the cytoplasm. In terms of biological role, participates actively in the response to hyperosmotic and heat shock by preventing the aggregation of stress-denatured proteins and by disaggregating proteins, also in an autonomous, DnaK-independent fashion. Unfolded proteins bind initially to DnaJ; upon interaction with the DnaJ-bound protein, DnaK hydrolyzes its bound ATP, resulting in the formation of a stable complex. GrpE releases ADP from DnaK; ATP binding to DnaK triggers the release of the substrate protein, thus completing the reaction cycle. Several rounds of ATP-dependent interactions between DnaJ, DnaK and GrpE are required for fully efficient folding. Also involved, together with DnaK and GrpE, in the DNA replication of plasmids through activation of initiation proteins. In Streptomyces avermitilis (strain ATCC 31267 / DSM 46492 / JCM 5070 / NBRC 14893 / NCIMB 12804 / NRRL 8165 / MA-4680), this protein is Chaperone protein DnaJ 2.